We begin with the raw amino-acid sequence, 68 residues long: Gene 42 protein (68 aa).

The protein is Gene 42 protein (42) of Mycobacterium phage D29 (Mycobacteriophage D29).